An 871-amino-acid polypeptide reads, in one-letter code: Patatin-like phospholipase domain-containing protein CNBE2340 (871 aa).

A disordered region spans residues 20–53 (NEDSPLSPRSFSLPPESPQLSTASPIHQRVSRKR). Positions 23–33 (SPLSPRSFSLP) are enriched in low complexity. A helical transmembrane segment spans residues 68-88 (WPLLFFIFFIIYLEFSAYVIT). A PNPLA domain is found at 243–435 (LCLSGGASFG…REDIPLGSLH (193 aa)). A GXSXG motif is present at residues 274 to 278 (GTSAG). Residue S276 is the Nucleophile of the active site. The active-site Proton acceptor is D422. Disordered regions lie at residues 586 to 707 (ALSH…NFGD), 720 to 748 (LSSPFRSIRSNTSSSSNNVQSPSSSQRFR), and 760 to 871 (VSES…QDGA). 2 stretches are compositionally biased toward polar residues: residues 594–606 (NDPATSLPETNPE) and 687–706 (PTHSPIATESPQRNYTSNFG). A compositionally biased stretch (low complexity) spans 721-748 (SSPFRSIRSNTSSSSNNVQSPSSSQRFR). The span at 798–820 (VESHSDRSEDEMLHSGANVKEEY) shows a compositional bias: basic and acidic residues.

It belongs to the PLPL family.

The protein resides in the membrane. Probable lipid hydrolase. This Cryptococcus neoformans var. neoformans serotype D (strain B-3501A) (Filobasidiella neoformans) protein is Patatin-like phospholipase domain-containing protein CNBE2340.